Here is a 572-residue protein sequence, read N- to C-terminus: Proline--tRNA ligase (572 aa).

The protein belongs to the class-II aminoacyl-tRNA synthetase family. ProS type 1 subfamily. In terms of assembly, homodimer.

The protein localises to the cytoplasm. The catalysed reaction is tRNA(Pro) + L-proline + ATP = L-prolyl-tRNA(Pro) + AMP + diphosphate. Catalyzes the attachment of proline to tRNA(Pro) in a two-step reaction: proline is first activated by ATP to form Pro-AMP and then transferred to the acceptor end of tRNA(Pro). As ProRS can inadvertently accommodate and process non-cognate amino acids such as alanine and cysteine, to avoid such errors it has two additional distinct editing activities against alanine. One activity is designated as 'pretransfer' editing and involves the tRNA(Pro)-independent hydrolysis of activated Ala-AMP. The other activity is designated 'posttransfer' editing and involves deacylation of mischarged Ala-tRNA(Pro). The misacylated Cys-tRNA(Pro) is not edited by ProRS. In Salmonella schwarzengrund (strain CVM19633), this protein is Proline--tRNA ligase.